We begin with the raw amino-acid sequence, 389 residues long: MLLALAQWLQNDYSFLRVVNYLTFRAVMANLTALVIGLAAGPWVIRKLTELKVGQAVRTIGPQTHLVKSGTPTMGGVLVLVSIAISTVLWCDWGNRFIWVVMLVTLGYGAIGWVDDYRKVVYRDPRGMSSREKFFWQTLIGLVAAVYLAFSVSESSNVRVWDLFLSWVEGGLSLDMPYKSNLIVPFFKEVSYPLGVAGFIVLTYLVIVGSSNAVNLTDGLDGLVIMPVVLVGGALGAFAYVMGSSVYSKYLLFPHIPGAGELLIFCSAMAGAGLAFLWFNAHPAQVFMGDVGALALGGALGTVAVIVRQEIVLFVMGGIFVVETVSVMLQVTWFKITKRRYGEGRRLFRMAPLHHHFELSGWKETQVTVRFWIVTMLLVLIGLSTLKLR.

10 consecutive transmembrane segments (helical) span residues 25–45, 74–94, 97–117, 134–154, 190–210, 222–242, 259–279, 286–306, 311–331, and 366–386; these read RAVM…PWVI, MGGV…CDWG, FIWV…VDDY, FFWQ…SVSE, VSYP…IVGS, GLVI…AYVM, AGEL…FLWF, VFMG…VAVI, IVLF…MLQV, and QVTV…LSTL.

This sequence belongs to the glycosyltransferase 4 family. MraY subfamily. It depends on Mg(2+) as a cofactor.

The protein resides in the cell inner membrane. The enzyme catalyses UDP-N-acetyl-alpha-D-muramoyl-L-alanyl-gamma-D-glutamyl-meso-2,6-diaminopimeloyl-D-alanyl-D-alanine + di-trans,octa-cis-undecaprenyl phosphate = di-trans,octa-cis-undecaprenyl diphospho-N-acetyl-alpha-D-muramoyl-L-alanyl-D-glutamyl-meso-2,6-diaminopimeloyl-D-alanyl-D-alanine + UMP. It functions in the pathway cell wall biogenesis; peptidoglycan biosynthesis. Its function is as follows. Catalyzes the initial step of the lipid cycle reactions in the biosynthesis of the cell wall peptidoglycan: transfers peptidoglycan precursor phospho-MurNAc-pentapeptide from UDP-MurNAc-pentapeptide onto the lipid carrier undecaprenyl phosphate, yielding undecaprenyl-pyrophosphoryl-MurNAc-pentapeptide, known as lipid I. The protein is Phospho-N-acetylmuramoyl-pentapeptide-transferase of Cupriavidus pinatubonensis (strain JMP 134 / LMG 1197) (Cupriavidus necator (strain JMP 134)).